A 473-amino-acid chain; its full sequence is Cyprosin (473 aa).

Residues 1–33 constitute a propeptide, activation peptide; the sequence is LKKRKVNILNHPGEHAGSNDANARRKYGVRGNF. A Peptidase A1 domain is found at 51–470; it reads YFGEIGIGTP…DYGNLRVGFA (420 aa). The active site involves Asp69. 2 disulfides stabilise this stretch: Cys82-Cys88 and Cys247-Cys251. Asp256 is an active-site residue. The region spanning 281-384 is the Saposin B-type domain; that stretch reads VMSQQCKSLV…DKLCERLPSP (104 aa). Cystine bridges form between Cys286-Cys378, Cys311-Cys350, Cys317-Cys347, and Cys392-Cys429. N-linked (GlcNAc...) asparagine glycosylation is present at Asn364.

The protein belongs to the peptidase A1 family. Mostly present in the violet parts of styles and corollas of mature flowers.

The protein is Cyprosin (CYPRO1) of Cynara cardunculus (Cardoon).